The sequence spans 518 residues: uncharacterized protein (518 aa).

Positions 1-21 (MWKWKVILLFLAEMFVSGVNG) are cleaved as a signal peptide. 7 N-linked (GlcNAc...) asparagine glycosylation sites follow: asparagine 30, asparagine 142, asparagine 295, asparagine 342, asparagine 362, asparagine 410, and asparagine 503. A CUB domain is found at 389-517 (CPPFGITNSV…RGFWVSITPQ (129 aa)).

It is found in the secreted. This is an uncharacterized protein from Caenorhabditis elegans.